The chain runs to 238 residues: uncharacterized protein (238 aa).

The next 4 helical transmembrane spans lie at 13 to 33 (TLFFIYFVFLTSFCLCFFGII), 40 to 60 (GSVGQLIAKLVVIVVLTLILG), 107 to 127 (VVLILSLVLTYYLSIYAFCQV), and 140 to 160 (VISLIILIFFLSLSFFVPMAF). 4Fe-4S ferredoxin-type domains follow at residues 178–208 (PFFQLKTNNNCVKCKLCEFKCPMQIKITEKL) and 204–233 (ITEKLDQKECIRCFECKSSCKKDALSFSYA). [4Fe-4S] cluster is bound by residues cysteine 188, cysteine 191, cysteine 194, cysteine 198, cysteine 213, cysteine 216, cysteine 219, and cysteine 223.

The protein resides in the cell membrane. This is an uncharacterized protein from Methanocaldococcus jannaschii (strain ATCC 43067 / DSM 2661 / JAL-1 / JCM 10045 / NBRC 100440) (Methanococcus jannaschii).